The primary structure comprises 782 residues: MEVRKLSISWQFLIVLVLILQILSALDFDPYKVLGVSRTASQADIKKAYKKLAREWHPDKNKDPGAEDKFIQISKAYEILSNEEKRSNYDQYGDAGENQGYQKQQQQREYRFRHFHENFYFDESFFHFPFNSERRDSIDEKYLLHFSHYVNEVVPDSFKKPYLIKITSDWCFSCIHIEPVWKEVVQELEELGVGIGVVHAGYERRLAHHLGAHSTPSILGIINGKISFFRNAVVRENLRQFVESLLPGNLVEKVTGKNYVRFLSGWQQENKPHVLLFDQTPIVPLLYKLTAFAYKDYLSFGYVYVGLRGTEEMTRRYNINIYAPTLLVFKEHINKPADVIQARGMKKQIIDDFITQNKHLLAARLTSQKLFHELCPVRRSHRQRKYCVVLLTAETTKLSKPFEAFLSFALANTQDTVRFVHVYSNRQQEFAGTLLPDGEAFQGKSAVSILERRNTAGRVVYKTLEDPWTGSESDKFILLGYLDQLRKDPALLSSEAVLPDLTDELAPVFLLRWFYSACDYISDCWDSIFHNNWREMMPLLSLIFSALFILFGTVIVQAFSDSSDERESSPPDKEEAQEKTGKTEPSFTKENSSKIPKKGFVEVTELTDVTYTSNLVRLRPGHMNVVLILSNSTKTSLLQKFALEVYTFTGSSCLHFSFLSLDKHREWLEYLLEFAQDAAPIPNQYDKHFMERDYTGYVLALNGHKKYFCLFKPQKTVEEEEAIGSCSDVDSSLYLGESRGKPSCGLGSRPIKGKLSKLSLWMERLLEGSLQRFYIPSWPELD.

The N-terminal stretch at 1-25 (MEVRKLSISWQFLIVLVLILQILSA) is a signal peptide. The Cytoplasmic portion of the chain corresponds to 26–535 (LDFDPYKVLG…DSIFHNNWRE (510 aa)). Positions 29-93 (DPYKVLGVSR…EKRSNYDQYG (65 aa)) constitute a J domain. The 129-residue stretch at 119–247 (FYFDESFFHF…LRQFVESLLP (129 aa)) folds into the Thioredoxin domain. Residues 536–556 (MMPLLSLIFSALFILFGTVIV) form a helical; Anchor for type IV membrane protein membrane-spanning segment. Over 557 to 782 (QAFSDSSDER…FYIPSWPELD (226 aa)) the chain is Extracellular. Residues 562-593 (SSDERESSPPDKEEAQEKTGKTEPSFTKENSS) are disordered. Residues 563-582 (SDERESSPPDKEEAQEKTGK) are compositionally biased toward basic and acidic residues. Residues 583–593 (TEPSFTKENSS) are compositionally biased toward polar residues. The N-linked (GlcNAc...) asparagine glycan is linked to asparagine 631.

Its subcellular location is the endoplasmic reticulum membrane. In terms of biological role, plays an important role in regulating the size of autophagosomes during the formation process. This chain is DnaJ homolog subfamily C member 16 (DNAJC16), found in Pongo abelii (Sumatran orangutan).